Here is a 40-residue protein sequence, read N- to C-terminus: Photosystem II reaction center protein J (40 aa).

Residues Ile-8 to Phe-28 traverse the membrane as a helical segment.

It belongs to the PsbJ family. As to quaternary structure, PSII is composed of 1 copy each of membrane proteins PsbA, PsbB, PsbC, PsbD, PsbE, PsbF, PsbH, PsbI, PsbJ, PsbK, PsbL, PsbM, PsbT, PsbX, PsbY, PsbZ, Psb30/Ycf12, at least 3 peripheral proteins of the oxygen-evolving complex and a large number of cofactors. It forms dimeric complexes.

The protein resides in the plastid. It is found in the chloroplast thylakoid membrane. One of the components of the core complex of photosystem II (PSII). PSII is a light-driven water:plastoquinone oxidoreductase that uses light energy to abstract electrons from H(2)O, generating O(2) and a proton gradient subsequently used for ATP formation. It consists of a core antenna complex that captures photons, and an electron transfer chain that converts photonic excitation into a charge separation. The chain is Photosystem II reaction center protein J from Helianthus annuus (Common sunflower).